The sequence spans 257 residues: Imidazole glycerol phosphate synthase subunit HisF (257 aa).

Active-site residues include Asp11 and Asp130.

This sequence belongs to the HisA/HisF family. In terms of assembly, heterodimer of HisH and HisF.

The protein localises to the cytoplasm. It catalyses the reaction 5-[(5-phospho-1-deoxy-D-ribulos-1-ylimino)methylamino]-1-(5-phospho-beta-D-ribosyl)imidazole-4-carboxamide + L-glutamine = D-erythro-1-(imidazol-4-yl)glycerol 3-phosphate + 5-amino-1-(5-phospho-beta-D-ribosyl)imidazole-4-carboxamide + L-glutamate + H(+). The protein operates within amino-acid biosynthesis; L-histidine biosynthesis; L-histidine from 5-phospho-alpha-D-ribose 1-diphosphate: step 5/9. In terms of biological role, IGPS catalyzes the conversion of PRFAR and glutamine to IGP, AICAR and glutamate. The HisF subunit catalyzes the cyclization activity that produces IGP and AICAR from PRFAR using the ammonia provided by the HisH subunit. In Proteus mirabilis (strain HI4320), this protein is Imidazole glycerol phosphate synthase subunit HisF.